The primary structure comprises 150 residues: 3-dehydroquinate dehydratase (150 aa).

Tyr26 acts as the Proton acceptor in catalysis. Substrate is bound by residues Asn77, His83, and Asp90. His103 acts as the Proton donor in catalysis. Substrate is bound by residues 104–105 (LS) and Arg114.

This sequence belongs to the type-II 3-dehydroquinase family. As to quaternary structure, homododecamer.

It carries out the reaction 3-dehydroquinate = 3-dehydroshikimate + H2O. Its pathway is metabolic intermediate biosynthesis; chorismate biosynthesis; chorismate from D-erythrose 4-phosphate and phosphoenolpyruvate: step 3/7. Catalyzes a trans-dehydration via an enolate intermediate. The polypeptide is 3-dehydroquinate dehydratase (Photorhabdus laumondii subsp. laumondii (strain DSM 15139 / CIP 105565 / TT01) (Photorhabdus luminescens subsp. laumondii)).